The chain runs to 178 residues: Protein FAM89A (178 aa).

Belongs to the FAM89 family.

This is Protein FAM89A (FAM89A) from Bos taurus (Bovine).